Here is a 198-residue protein sequence, read N- to C-terminus: ATP-dependent Clp protease proteolytic subunit (198 aa).

The active-site Nucleophile is serine 98. Residue histidine 123 is part of the active site.

It belongs to the peptidase S14 family. In terms of assembly, fourteen ClpP subunits assemble into 2 heptameric rings which stack back to back to give a disk-like structure with a central cavity, resembling the structure of eukaryotic proteasomes.

It is found in the cytoplasm. It carries out the reaction Hydrolysis of proteins to small peptides in the presence of ATP and magnesium. alpha-casein is the usual test substrate. In the absence of ATP, only oligopeptides shorter than five residues are hydrolyzed (such as succinyl-Leu-Tyr-|-NHMec, and Leu-Tyr-Leu-|-Tyr-Trp, in which cleavage of the -Tyr-|-Leu- and -Tyr-|-Trp bonds also occurs).. Its function is as follows. Cleaves peptides in various proteins in a process that requires ATP hydrolysis. Has a chymotrypsin-like activity. Plays a major role in the degradation of misfolded proteins. The chain is ATP-dependent Clp protease proteolytic subunit from Levilactobacillus brevis (strain ATCC 367 / BCRC 12310 / CIP 105137 / JCM 1170 / LMG 11437 / NCIMB 947 / NCTC 947) (Lactobacillus brevis).